The sequence spans 465 residues: Sodium-coupled neutral amino acid transporter 7 (465 aa).

Helical transmembrane passes span 54 to 74 (AVFI…PAAF), 82 to 102 (AGVT…VILA), 128 to 148 (ICEL…LIII), 177 to 197 (FTIT…KEIG), 204 to 224 (TLSV…YIWP), 244 to 264 (FNAM…VPVF), 275 to 295 (WWGV…GTGV), 318 to 338 (VAVA…YPIL), 370 to 390 (ILQT…IPDI), 394 to 414 (ISLI…LCLI), and 427 to 447 (SWNA…FIFG).

Belongs to the amino acid/polyamine transporter 2 family.

It localises to the lysosome membrane. It is found in the cell projection. Its subcellular location is the axon. It carries out the reaction L-asparagine(in) + Na(+)(in) = L-asparagine(out) + Na(+)(out). It catalyses the reaction L-glutamine(in) + Na(+)(in) = L-glutamine(out) + Na(+)(out). Its function is as follows. Symporter that selectively cotransports sodium ions and amino acids, such as L-glutamine and L-asparagine from the lysosome into the cytoplasm and may participates in mTORC1 activation. The transport activity requires an acidic lysosomal lumen. The protein is Sodium-coupled neutral amino acid transporter 7 of Danio rerio (Zebrafish).